The chain runs to 340 residues: MTKKRITFGLLVLMVCVILFVLYVQLRNKDSIPVQSSAIHPEEDRIFFIYSNPFIKESVLLSTSTGERFNRRTFKVADVPYIQTKSYASTDLVLLAEHEPFYYTLEKDVIKEHPLSDPFAFWYEGKDVTIEAYNVDTTGNEIHINDRKTKKEYTLTLPPLVTMGASDENFIYIIQSMSIYVIDRKTEEMIETLSLASYADQFADSEEFIVASSDHKLTVIEKGTWKTTYIAYPEDLEYADTVYYDKESGSFYVAYEDKEGGANLLEYGEDFSIHTYSLKFPYMEAKFKGNLLYIVAQEEHKKGIGGYVGVFDIHSKEMLYQFDLPEEQVKVQDFVVVDNK.

Residues 6–26 form a helical membrane-spanning segment; the sequence is ITFGLLVLMVCVILFVLYVQL.

It localises to the cell membrane. This is an uncharacterized protein from Bacillus subtilis (strain 168).